Reading from the N-terminus, the 739-residue chain is Catalase-peroxidase (739 aa).

Residues 1-20 (MGSNECPYSRQNANIGGGGQ) form a disordered region. Residues 94-217 (WHSAGTYRVF…LAASHMGLIY (124 aa)) constitute a cross-link (tryptophyl-tyrosyl-methioninium (Trp-Tyr) (with M-243)). His-95 (proton acceptor) is an active-site residue. The segment at residues 217-243 (YVNPEGPNKNPDPVLAAKDIRITFGRM) is a cross-link (tryptophyl-tyrosyl-methioninium (Tyr-Met) (with W-94)). Residue His-258 participates in heme b binding.

The protein belongs to the peroxidase family. Peroxidase/catalase subfamily. As to quaternary structure, homodimer or homotetramer. It depends on heme b as a cofactor. In terms of processing, formation of the three residue Trp-Tyr-Met cross-link is important for the catalase, but not the peroxidase activity of the enzyme.

It localises to the cytoplasm. It carries out the reaction H2O2 + AH2 = A + 2 H2O. The catalysed reaction is 2 H2O2 = O2 + 2 H2O. In terms of biological role, bifunctional enzyme with both catalase and broad-spectrum peroxidase activity. This chain is Catalase-peroxidase, found in Emericella nidulans (strain FGSC A4 / ATCC 38163 / CBS 112.46 / NRRL 194 / M139) (Aspergillus nidulans).